Here is a 598-residue protein sequence, read N- to C-terminus: UvrABC system protein C (598 aa).

Residues 13–92 (SSPGVYLMKD…IKKYQPRYNV (80 aa)) enclose the GIY-YIG domain. One can recognise a UVR domain in the interval 206–241 (DTTIANLEEAIKKASQEHKFEHAAALYRTLTLIRQT).

This sequence belongs to the UvrC family. In terms of assembly, interacts with UvrB in an incision complex.

It is found in the cytoplasm. Functionally, the UvrABC repair system catalyzes the recognition and processing of DNA lesions. UvrC both incises the 5' and 3' sides of the lesion. The N-terminal half is responsible for the 3' incision and the C-terminal half is responsible for the 5' incision. The protein is UvrABC system protein C of Chlamydia muridarum (strain MoPn / Nigg).